The primary structure comprises 227 residues: MKFAVIVFPGSNCDVDMFHAIKDELGEEVDYVWHDTENLDEYDAILLPGGFSYGDYLRCGAISRFANAMKAVQKAAEQGKPILGVCNGFQILVESGLLPGALMRNENLKFMCRTVQLRVENNETMFTSQYEKDEVINIPIAHGEGNYYCDEETLKQLEENNQIAFRYVENPNGSVSDIAGIVNEKGNVLGMMPHPERAVDELLGGAEGLKVFQSILKQWRETYVVNA.

Residues 3–225 enclose the Glutamine amidotransferase type-1 domain; it reads FAVIVFPGSN…LKQWRETYVV (223 aa). Cysteine 86 serves as the catalytic Nucleophile. Catalysis depends on residues histidine 194 and glutamate 196.

As to quaternary structure, part of the FGAM synthase complex composed of 1 PurL, 1 PurQ and 2 PurS subunits.

Its subcellular location is the cytoplasm. It carries out the reaction N(2)-formyl-N(1)-(5-phospho-beta-D-ribosyl)glycinamide + L-glutamine + ATP + H2O = 2-formamido-N(1)-(5-O-phospho-beta-D-ribosyl)acetamidine + L-glutamate + ADP + phosphate + H(+). The enzyme catalyses L-glutamine + H2O = L-glutamate + NH4(+). It participates in purine metabolism; IMP biosynthesis via de novo pathway; 5-amino-1-(5-phospho-D-ribosyl)imidazole from N(2)-formyl-N(1)-(5-phospho-D-ribosyl)glycinamide: step 1/2. Its function is as follows. Part of the phosphoribosylformylglycinamidine synthase complex involved in the purines biosynthetic pathway. Catalyzes the ATP-dependent conversion of formylglycinamide ribonucleotide (FGAR) and glutamine to yield formylglycinamidine ribonucleotide (FGAM) and glutamate. The FGAM synthase complex is composed of three subunits. PurQ produces an ammonia molecule by converting glutamine to glutamate. PurL transfers the ammonia molecule to FGAR to form FGAM in an ATP-dependent manner. PurS interacts with PurQ and PurL and is thought to assist in the transfer of the ammonia molecule from PurQ to PurL. The polypeptide is Phosphoribosylformylglycinamidine synthase subunit PurQ (Bacillus anthracis (strain A0248)).